A 148-amino-acid polypeptide reads, in one-letter code: Large ribosomal subunit protein bL9 (148 aa).

The protein belongs to the bacterial ribosomal protein bL9 family.

In terms of biological role, binds to the 23S rRNA. This is Large ribosomal subunit protein bL9 from Bacillus cereus (strain G9842).